Consider the following 338-residue polypeptide: Lipoate-protein ligase A (338 aa).

In terms of domain architecture, BPL/LPL catalytic spans 29 to 216 (PATQRVLFLW…AFFEHYSERV (188 aa)). ATP-binding positions include Arg-71, 76 to 79 (GAVF), and Lys-134. A (R)-lipoate-binding site is contributed by Lys-134.

It belongs to the LplA family. Monomer.

The protein localises to the cytoplasm. It carries out the reaction L-lysyl-[lipoyl-carrier protein] + (R)-lipoate + ATP = N(6)-[(R)-lipoyl]-L-lysyl-[lipoyl-carrier protein] + AMP + diphosphate + H(+). The protein operates within protein modification; protein lipoylation via exogenous pathway; protein N(6)-(lipoyl)lysine from lipoate: step 1/2. Its pathway is protein modification; protein lipoylation via exogenous pathway; protein N(6)-(lipoyl)lysine from lipoate: step 2/2. Its function is as follows. Catalyzes both the ATP-dependent activation of exogenously supplied lipoate to lipoyl-AMP and the transfer of the activated lipoyl onto the lipoyl domains of lipoate-dependent enzymes. In Enterobacter sp. (strain 638), this protein is Lipoate-protein ligase A.